The chain runs to 221 residues: MSDAPAESAPAQIDPAQTDPAEQPVQILPRERSDIPDAVARIPRPPVPHLDPPFALRVARLGDADMVAEWMNRPHLAAAWEYDWPTPRWRRHLGAQLQGSYSLPLIGSMRGVDLAYLELYWAAKDLISRYYDAEPYDLGLHAAIADVKLVNRGLGPMLLPRIVASVFATEPRCRRVMFDPDHRNTTARRLCEYAGCRFLGEHDTTNRRMALYALDAPTTDR.

The interval 1 to 34 (MSDAPAESAPAQIDPAQTDPAEQPVQILPRERSD) is disordered. Position 141 (histidine 141) interacts with substrate. The active-site Proton acceptor is aspartate 179.

The protein belongs to the lysine N-acyltransferase MbtK family. As to quaternary structure, monomer.

The protein operates within siderophore biosynthesis; mycobactin biosynthesis. Its function is as follows. Acyltransferase required for the direct transfer of medium- to long-chain fatty acyl moieties from a carrier protein (MbtL) on to the epsilon-amino group of lysine residue in the mycobactin core. The protein is Lysine N-acyltransferase MbtK (mbtK) of Mycolicibacterium paratuberculosis (strain ATCC BAA-968 / K-10) (Mycobacterium paratuberculosis).